A 298-amino-acid polypeptide reads, in one-letter code: Bifunctional protein FolD (298 aa).

Residues 166–168 (GRS), Ser-191, and Ile-232 contribute to the NADP(+) site.

Belongs to the tetrahydrofolate dehydrogenase/cyclohydrolase family. In terms of assembly, homodimer.

It carries out the reaction (6R)-5,10-methylene-5,6,7,8-tetrahydrofolate + NADP(+) = (6R)-5,10-methenyltetrahydrofolate + NADPH. The catalysed reaction is (6R)-5,10-methenyltetrahydrofolate + H2O = (6R)-10-formyltetrahydrofolate + H(+). The protein operates within one-carbon metabolism; tetrahydrofolate interconversion. Its function is as follows. Catalyzes the oxidation of 5,10-methylenetetrahydrofolate to 5,10-methenyltetrahydrofolate and then the hydrolysis of 5,10-methenyltetrahydrofolate to 10-formyltetrahydrofolate. This Parvibaculum lavamentivorans (strain DS-1 / DSM 13023 / NCIMB 13966) protein is Bifunctional protein FolD.